The chain runs to 184 residues: Photosystem I assembly protein Ycf4 (184 aa).

2 helical membrane-spanning segments follow: residues 19 to 39 and 57 to 77; these read ISNF…LLVG and IVFF…LFIS.

It belongs to the Ycf4 family.

It is found in the plastid. The protein resides in the chloroplast thylakoid membrane. Seems to be required for the assembly of the photosystem I complex. This Nymphaea alba (White water-lily) protein is Photosystem I assembly protein Ycf4.